Here is a 122-residue protein sequence, read N- to C-terminus: Large ribosomal subunit protein uL14 (122 aa).

The protein belongs to the universal ribosomal protein uL14 family. In terms of assembly, part of the 50S ribosomal subunit. Forms a cluster with proteins L3 and L19. In the 70S ribosome, L14 and L19 interact and together make contacts with the 16S rRNA in bridges B5 and B8.

Its function is as follows. Binds to 23S rRNA. Forms part of two intersubunit bridges in the 70S ribosome. This chain is Large ribosomal subunit protein uL14, found in Ligilactobacillus salivarius (strain UCC118) (Lactobacillus salivarius).